The primary structure comprises 248 residues: Allergin-1 (248 aa).

The signal sequence occupies residues Met-1–Ser-33. Residues Ile-34–Ser-150 lie on the Extracellular side of the membrane. An Ig-like C2-type domain is found at Pro-54 to Thr-137. Asn-68 carries an N-linked (GlcNAc...) asparagine glycan. Cys-73 and Cys-120 form a disulfide bridge. Residue Asn-135 is glycosylated (N-linked (GlcNAc...) asparagine). The helical transmembrane segment at Leu-151–Leu-171 threads the bilayer. Residues Lys-172–Tyr-248 lie on the Cytoplasmic side of the membrane. Short sequence motifs (ITIM motif) lie at residues Ile-216–Pro-221 and Tyr-241–Leu-246. 2 positions are modified to phosphotyrosine: Tyr-218 and Tyr-243.

In terms of assembly, monomer. Interacts (tyrosine-phosphorylated) with PTPN6, PTPN11 and INPP5D. Post-translationally, N-glycosylated. As to expression, mast cell-specific. Expressed in primary and transformed mast cells.

The protein resides in the cell membrane. Immunoglobulin-like receptor which plays an inhibitory role in degranulation of mast cells. Negatively regulates IgE-mediated mast cell activation and suppresses the type I immediate hypersensitivity reaction. The protein is Allergin-1 (Milr1) of Rattus norvegicus (Rat).